The primary structure comprises 822 residues: Telomere length regulation protein TEL2 homolog (822 aa).

The interval 442–504 (NDDEEEQPDA…ADQEKKKSAP (63 aa)) is disordered. Residues 465–477 (VSSQSVASDPGNG) are compositionally biased toward polar residues. Residues 480–489 (SELDSDDDLT) show a composition bias toward acidic residues.

It belongs to the TEL2 family.

It localises to the cytoplasm. Its subcellular location is the membrane. It is found in the nucleus. Regulator of the DNA damage response (DDR). Part of the TTT complex that is required to stabilize protein levels of the phosphatidylinositol 3-kinase-related protein kinase (PIKK) family proteins. Promotes assembly, stabilizes and maintains the activity of TORC complexes, which regulate cell growth and survival in response to nutrient and hormonal signals. May be involved in telomere length regulation. The polypeptide is Telomere length regulation protein TEL2 homolog (telo2) (Danio rerio (Zebrafish)).